The sequence spans 705 residues: Polyribonucleotide nucleotidyltransferase (705 aa).

The Mg(2+) site is built by D487 and D493. One can recognise a KH domain in the interval P554 to I613. The region spanning G623 to K691 is the S1 motif domain.

Belongs to the polyribonucleotide nucleotidyltransferase family. Homodimer. Component of a possible RNA degradosome complex composed of rny, rnjA, rnjB, pnp, pfkA and eno (although rnjA and rnjB's presence is unclear). RNA helicase CshA may also be a member of this complex. Requires Mg(2+) as cofactor.

It is found in the cytoplasm. It catalyses the reaction RNA(n+1) + phosphate = RNA(n) + a ribonucleoside 5'-diphosphate. In terms of biological role, involved in mRNA degradation. Catalyzes the phosphorolysis of single-stranded polyribonucleotides processively in the 3'- to 5'-direction. Necessary for competence development in Bacillus subtilis. May be necessary for modification of the srfA transcript (stabilization or translation activation). Involved in processing precursor type I toxin-antitoxin RNAs antitoxin SR4 and SR5 RNAs to their mature forms. In Bacillus subtilis (strain 168), this protein is Polyribonucleotide nucleotidyltransferase.